We begin with the raw amino-acid sequence, 989 residues long: MKSYISLFFILCVIFNKNVIKCTGESQTGNTGGGQAGNTVGDQAGSTGGSPQGSTGASQPGSSEPSNPVSSGHSVSTVSVSQTSTSSEKQDTIQVKSALLKDYMGLKVTGPCNENFIMFLVPHIYIDVDTEDTNIELRTTLKETNNAISFESNSGSLEKKKYVKLPSNGTTGEQGSSTGTVRGDTEPISDSSSSSSSSSSSSSSSSSSSSSSSSSSSSSSSSSSSESLPANGPDSPTVKPPRNLQNICETGKNFKLVVYIKENTLIIKWKVYGETKDTTENNKVDVRKYLINEKETPFTSILIHAYKEHNGTNLIESKNYALGSDIPEKCDTLASNCFLSGNFNIEKCFQCALLVEKENKNDVCYKYLSEDIVSNFKEIKAETEDDDEDDYTEYKLTESIDNILVKMFKTNENNDKSELIKLEEVDDSLKLELMNYCSLLKDVDTTGTLDNYGMGNEMDIFNNLKRLLIYHSEENINTLKNKFRNAAVCLKNVDDWIVNKRGLVLPELNYDLEYFNEHLYNDKNSPEDKDNKGKGVVHVDTTLEKEDTLSYDNSDNMFCNKEYCNRLKDENNCISNLQVEDQGNCDTSWIFASKYHLETIRCMKGYEPTKISALYVANCYKGEHKDRCDEGSSPMEFLQIIEDYGFLPAESNYPYNYVKVGEQCPKVEDHWMNLWDNGKILHNKNEPNSLDGKGYTAYESERFHDNMDAFVKIIKTEVMNKGSVIAYIKAENVMGYEFSGKKVQNLCGDDTADHAVNIVGYGNYVNSEGEKKSYWIVRNSWGPYWGDEGYFKVDMYGPTHCHFNFIHSVVIFNVDLPMNNKTTKKESKIYDYYLKASPEFYHNLYFKNFNVGKKNLFSEKEDNENNKKLGNNYIIFGQDTAGSGQSGKESNTALESAGTSNEVSERVHVYHILKHIKDGKIRMGMRKYIDTQDVNKKHSCTRSYAFNPENYEKCVNLCNVNWKTCEEKTSPGLCLSKLDTNNECYFCYV.

An N-terminal signal peptide occupies residues 1 to 16 (MKSYISLFFILCVIFN). Disordered regions lie at residues 26 to 91 (SQTG…EKQD) and 165 to 245 (LPSN…RNLQ). Low complexity-rich tracts occupy residues 52–87 (QGST…STSS), 167–180 (SNGT…STGT), and 191–225 (SSSS…SSSS). The residue at position 167 (Ser-167) is a Phosphoserine. Asn-168 is a glycosylation site (N-linked (GlcNAc...) asparagine). Positions 208-245 (SSSSSSSSSSSSSSSSSSESLPANGPDSPTVKPPRNLQ) are interaction with PTKL. N-linked (GlcNAc...) asparagine glycosylation is present at Asn-310. The interaction with host VTN stretch occupies residues 365 to 382 (YKYLSEDIVSNFKEIKAE). Cysteines 437 and 489 form a disulfide. Thr-541 carries the phosphothreonine modification. 5 cysteine pairs are disulfide-bonded: Cys-559–Cys-564, Cys-573–Cys-602, Cys-585–Cys-628, Cys-619–Cys-664, and Cys-747–Cys-801. The segment at 571–989 (NNCISNLQVE…TNNECYFCYV (419 aa)) is thiol-protease-like. Residues His-754 and Asn-779 contribute to the active site. The N-linked (GlcNAc...) asparagine glycan is linked to Asn-820. Positions 835 to 878 (KASPEFYHNLYFKNFNVGKKNLFSEKEDNENNKKLGNNYIIFGQ) are cleaved as a propeptide — inhibition peptide. Ser-858 carries the phosphoserine modification.

The protein belongs to the peptidase C1 family. May interact (via C-terminus) with PTKL (via SAM domain). As to quaternary structure, interacts (via C-terminus) with human VTN (via hemopexin repeat 2); may form heterotetramers of two VTN and SERA5 P47 heterodimers; the interaction may protect merozoites from phagocytosis by host monocytes; VTN glycosylation appears to be dispensable for the interaction. In terms of assembly, monomer. Interacts with kinase CPK1/CDPK1 at the schizont stage. Phosphorylation by CPK1/CDPK1 increases SERA5 protease activity towards a synthetic peptide in vitro. In terms of processing, just prior to merozoite egress from host erythrocytes, proteolytically cleaved into multiple fragments. Cleaved by SUB1 into p47 and p73, p73 is further cleaved by SUB1 into p56 and p18 and p56 is further processed into p50 by an unidentified protease. p47 remains covalently associated with p18 via disulfide bond. p47 can be processed into p25n and p25c by SUB1. p25c and p25n remain associated with p18. Proteolytic processing is essential for merozoite egress from host erythrocytes. The cleavage of the propeptide to produce p50 is necessary for protease activity and to promote merozoite egress.

Its subcellular location is the parasitophorous vacuole. The protein resides in the secreted. It localises to the cell membrane. Functionally, plays an essential role during the asexual blood stage development by controlling the kinetics of merozoite egress from host erythrocytes. Specifically, prevents premature rupture of the parasitophorous vacuole and host erythrocyte membranes. May prevent merozoite phagocytosis by host monocytes via interaction with host VTN at the merozoite surface. Plays a role in parasite growth. Its function is as follows. Protease activity is controversial. In Plasmodium falciparum (isolate CDC / Honduras), this protein is Serine-repeat antigen protein 5.